Consider the following 269-residue polypeptide: Xyloglucan endotransglucosylase/hydrolase protein 24 (269 aa).

Residues 1–21 (MSPFKIFFFTTLLVAAFSVSA) form the signal peptide. The GH16 domain occupies 22–212 (ADFNTDVNVA…WSKAPFMASY (191 aa)). The active-site Nucleophile is the glutamate 98. The Proton donor role is filled by glutamate 102. Glutamate 102 provides a ligand contact to xyloglucan. Asparagine 106 carries an N-linked (GlcNAc...) asparagine glycan. Residues 115–117 (HTN), 125–127 (DKE), 191–192 (DW), glycine 196, and arginine 256 contribute to the xyloglucan site. Residues cysteine 251 and cysteine 265 are joined by a disulfide bond.

Belongs to the glycosyl hydrolase 16 family. XTH group 2 subfamily. In terms of processing, contains at least one intrachain disulfide bond essential for its enzymatic activity. N-glycosylated; essential for its enzymatic activity. Highly expressed. Predominantly expressed in stems. Expressed in shoot apical meristems, also found in seedlings and meristems.

It is found in the secreted. The protein localises to the cell wall. The protein resides in the extracellular space. It localises to the apoplast. It catalyses the reaction breaks a beta-(1-&gt;4) bond in the backbone of a xyloglucan and transfers the xyloglucanyl segment on to O-4 of the non-reducing terminal glucose residue of an acceptor, which can be a xyloglucan or an oligosaccharide of xyloglucan.. Its function is as follows. Catalyzes xyloglucan endohydrolysis (XEH) and/or endotransglycosylation (XET). Cleaves and religates xyloglucan polymers, an essential constituent of the primary cell wall, and thereby participates in cell wall construction of growing tissues. May be required during development to modify the walls of cells under mechanical stress. The sequence is that of Xyloglucan endotransglucosylase/hydrolase protein 24 (XTH24) from Arabidopsis thaliana (Mouse-ear cress).